The sequence spans 493 residues: MKKLLPILIGLSLSGFSSLSQAENLMQVYQQARLSNPELRKSAADRDAAFEKINEARSPLLPQLGLGADYTYSNGYRDANGINSNATSASLQLTQSIFDMSKWRALTLQEKAAGIQDVTYQTDQQTLILNTATAYFNVLNAIDVLSYTQAQKEAIYRQLDQTTQRFNVGLVAITDVQNARAQYDTVLANEVTARNNLDNAVEQLRQITGNYYPELAALNVENFKTDKPQPVNALLKEAEKRNLSLLQARLSQDLAREQIRQAQDGHLPTLDLTASTGISDTSYSGSKTRGAAGTQYDDSNMGQNKVGLSFSLPIYQGGMVNSQVKQAQYNFVGASEQLESAHRSVVQTVRSSFNNINASISSINAYKQAVVSAQSSLDAMEAGYSVGTRTIVDVLDATTTLYNAKQELANARYNYLINQLNIKSALGTLNEQDLLALNNALSKPVSTNPENVAPQTPEQNAIADGYAPDSPAPVVQQTSARTTTSNGHNPFRN.

A signal peptide spans 1 to 22 (MKKLLPILIGLSLSGFSSLSQA). The Periplasmic segment spans residues 23–62 (ENLMQVYQQARLSNPELRKSAADRDAAFEKINEARSPLLP). Repeat copies occupy residues 23 to 230 (ENLM…KPQP) and 231 to 446 (VNAL…KPVS). The chain crosses the membrane as a beta stranded span at residues 63 to 74 (QLGLGADYTYSN). The Extracellular portion of the chain corresponds to 75–82 (GYRDANGI). The chain crosses the membrane as a beta stranded span at residues 83-96 (NSNATSASLQLTQS). Residues 97–268 (IFDMSKWRAL…IRQAQDGHLP (172 aa)) are Periplasmic-facing. A beta stranded membrane pass occupies residues 269–279 (TLDLTASTGIS). A disordered region spans residues 270–298 (LDLTASTGISDTSYSGSKTRGAAGTQYDD). Over residues 272–287 (LTASTGISDTSYSGSK) the composition is skewed to polar residues. At 280-300 (DTSYSGSKTRGAAGTQYDDSN) the chain is on the extracellular side. The chain crosses the membrane as a beta stranded span at residues 301-311 (MGQNKVGLSFS). Over 312–493 (LPIYQGGMVN…TSNGHNPFRN (182 aa)) the chain is Periplasmic. Polar residues-rich tracts occupy residues 446–459 (STNP…TPEQ) and 475–493 (VQQT…PFRN). Positions 446-493 (STNPENVAPQTPEQNAIADGYAPDSPAPVVQQTSARTTTSNGHNPFRN) are disordered.

This sequence belongs to the outer membrane factor (OMF) (TC 1.B.17) family. In terms of assembly, homotrimer. Part of tripartite efflux systems, which are composed of an inner membrane transporter, a periplasmic membrane fusion protein, and an outer membrane component, TolC. The complexes form a large protein conduit and can translocate molecules across both the inner and outer membranes. TolC interacts with the membrane fusion proteins AcrA, EmrA and MacA.

Its subcellular location is the cell outer membrane. In vitro, inhibited by hexaamminecobalt(3+). Functionally, outer membrane channel, which is required for the function of several efflux systems such as AcrAB-TolC, AcrEF-TolC, EmrAB-TolC and MacAB-TolC. These systems are involved in export of antibiotics and other toxic compounds from the cell. TolC is also involved in import of colicin E1 into the cells. The sequence is that of Outer membrane protein TolC (tolC) from Escherichia coli (strain K12).